A 232-amino-acid polypeptide reads, in one-letter code: MELSEHEEDAGDVGGGCSSPPTPPHRVLTSAAPETIRCRYHECLRNHAAASGGHVVDGCGEFMPASTEEPLACAACGCHRSFHRRDPSPGRAGAARLLQLHLPASINSRAPPALLLPPAAAASKQGLPFPGYGTPSGGTGTTTASSSDERLRPSPVQPRRRSRTTFTREQKEQMLAFAERVGWRIQRQEEATVEHFCAQVGVRRQALKVWMHNNKHSFKQKQQQENRQEQQQ.

Over residues 1–11 (MELSEHEEDAG) the composition is skewed to acidic residues. The segment at 1 to 25 (MELSEHEEDAGDVGGGCSSPPTPPH) is disordered. The ZF-HD dimerization-type; degenerate zinc finger occupies 40–86 (YHECLRNHAAASGGHVVDGCGEFMPASTEEPLACAACGCHRSFHRRD). The segment at 126-170 (GLPFPGYGTPSGGTGTTTASSSDERLRPSPVQPRRRSRTTFTREQ) is disordered. A DNA-binding region (homeobox) is located at residues 159-222 (RRRSRTTFTR…NNKHSFKQKQ (64 aa)).

In terms of assembly, homo- and heterodimer with other ZFHD proteins.

It localises to the nucleus. Its function is as follows. Putative transcription factor. In Oryza sativa subsp. indica (Rice), this protein is Zinc-finger homeodomain protein 5 (ZHD5).